A 727-amino-acid polypeptide reads, in one-letter code: Glucans biosynthesis glucosyltransferase H (727 aa).

A disordered region spans residues 17–41; it reads GSAMPNERPGPMEPQSLSQMPEGFP. Transmembrane regions (helical) follow at residues 58 to 80, 95 to 117, 407 to 429, 457 to 479, 499 to 521, and 572 to 594; these read FFVV…AVFS, FAIN…LLLL, GIMA…MLAL, ALRL…VLLL, VLFE…CGAV, and LLAW…AWTG.

The protein belongs to the glycosyltransferase 2 family. OpgH subfamily.

It localises to the cell inner membrane. It participates in glycan metabolism; osmoregulated periplasmic glucan (OPG) biosynthesis. Its function is as follows. Involved in the biosynthesis of osmoregulated periplasmic glucans (OPGs). The polypeptide is Glucans biosynthesis glucosyltransferase H (Shewanella oneidensis (strain ATCC 700550 / JCM 31522 / CIP 106686 / LMG 19005 / NCIMB 14063 / MR-1)).